Here is a 1172-residue protein sequence, read N- to C-terminus: Ras guanine nucleotide exchange factor W (1172 aa).

2 stretches are compositionally biased toward low complexity: residues 34–70 and 78–87; these read PIYT…LNNL and NSNSVNNTIS. 3 disordered regions span residues 34-100, 138-162, and 186-246; these read PIYT…RSNT, KFLD…RIQQ, and FKRS…EIKD. Low complexity predominate over residues 194-241; sequence QPPQSQSQQQQQLQLQQQQQQSMPNLSLGNNINSNNNNNNGSENNDIS. Transmembrane regions (helical) follow at residues 286–306, 320–340, 347–367, 378–400, 432–452, and 545–565; these read IWLT…DIIG, IMAV…LNLF, FPGT…VTDI, VLSI…ISLI, LTTN…QLLV, and ILHL…NLLI. Residues 666–702 are a coiled coil; the sequence is LLGMLNEIDDSLQAAKEKVEEESIQNSILKKDIEDLY. Residues 765 to 903 enclose the N-terminal Ras-GEF domain; it reads DLNVIQYATI…YIDSIHKRKM (139 aa). The Ras-GEF domain maps to 938–1170; sequence DISDIAIQIT…WKMSLSCEQR (233 aa).

The protein localises to the membrane. Functionally, promotes the exchange of Ras-bound GDP by GTP. The sequence is that of Ras guanine nucleotide exchange factor W (gefW) from Dictyostelium discoideum (Social amoeba).